Consider the following 127-residue polypeptide: Small ribosomal subunit protein bS6 (127 aa).

It belongs to the bacterial ribosomal protein bS6 family.

In terms of biological role, binds together with bS18 to 16S ribosomal RNA. The chain is Small ribosomal subunit protein bS6 from Buchnera aphidicola subsp. Cinara cedri (strain Cc).